Reading from the N-terminus, the 510-residue chain is 2,3-bisphosphoglycerate-independent phosphoglycerate mutase (510 aa).

Residues Asp-13 and Ser-63 each contribute to the Mn(2+) site. Residue Ser-63 is the Phosphoserine intermediate of the active site. Substrate is bound by residues His-124, 154–155 (RD), Arg-186, Arg-192, 262–265 (RADR), and Lys-334. Asp-401, His-405, Asp-442, His-443, and His-461 together coordinate Mn(2+).

This sequence belongs to the BPG-independent phosphoglycerate mutase family. In terms of assembly, monomer. Requires Mn(2+) as cofactor.

It catalyses the reaction (2R)-2-phosphoglycerate = (2R)-3-phosphoglycerate. The protein operates within carbohydrate degradation; glycolysis; pyruvate from D-glyceraldehyde 3-phosphate: step 3/5. Functionally, catalyzes the interconversion of 2-phosphoglycerate and 3-phosphoglycerate. The protein is 2,3-bisphosphoglycerate-independent phosphoglycerate mutase of Aliivibrio fischeri (strain MJ11) (Vibrio fischeri).